The chain runs to 192 residues: Phosphoheptose isomerase (192 aa).

The region spanning 37 to 192 is the SIS domain; sequence LADSFKGGGK…IQLIEKEMVK (156 aa). A substrate-binding site is contributed by 52–54; the sequence is NGG. The Zn(2+) site is built by histidine 61 and glutamate 65. Substrate-binding positions include glutamate 65, 93 to 94, 119 to 121, serine 124, and glutamine 172; these read ND and STS. Residues glutamine 172 and histidine 180 each coordinate Zn(2+).

This sequence belongs to the SIS family. GmhA subfamily. As to quaternary structure, homotetramer. It depends on Zn(2+) as a cofactor.

Its subcellular location is the cytoplasm. It catalyses the reaction 2 D-sedoheptulose 7-phosphate = D-glycero-alpha-D-manno-heptose 7-phosphate + D-glycero-beta-D-manno-heptose 7-phosphate. The protein operates within carbohydrate biosynthesis; D-glycero-D-manno-heptose 7-phosphate biosynthesis; D-glycero-alpha-D-manno-heptose 7-phosphate and D-glycero-beta-D-manno-heptose 7-phosphate from sedoheptulose 7-phosphate: step 1/1. Catalyzes the isomerization of sedoheptulose 7-phosphate in D-glycero-D-manno-heptose 7-phosphate. The polypeptide is Phosphoheptose isomerase (Escherichia coli O7:K1 (strain IAI39 / ExPEC)).